The sequence spans 118 residues: Small ribosomal subunit protein uS13 (118 aa).

The segment at 94 to 118 is disordered; the sequence is SLPVRGQRTKTNARTRKGPRRPIKR.

This sequence belongs to the universal ribosomal protein uS13 family. Part of the 30S ribosomal subunit. Forms a loose heterodimer with protein S19. Forms two bridges to the 50S subunit in the 70S ribosome.

Functionally, located at the top of the head of the 30S subunit, it contacts several helices of the 16S rRNA. In the 70S ribosome it contacts the 23S rRNA (bridge B1a) and protein L5 of the 50S subunit (bridge B1b), connecting the 2 subunits; these bridges are implicated in subunit movement. Contacts the tRNAs in the A and P-sites. The sequence is that of Small ribosomal subunit protein uS13 from Dichelobacter nodosus (strain VCS1703A).